The chain runs to 193 residues: Large ribosomal subunit protein uL5 (193 aa).

Belongs to the universal ribosomal protein uL5 family. As to quaternary structure, part of the 50S ribosomal subunit; part of the 5S rRNA/L5/L18/L25 subcomplex. Contacts the 5S rRNA and the P site tRNA. Forms a bridge to the 30S subunit in the 70S ribosome.

This is one of the proteins that bind and probably mediate the attachment of the 5S RNA into the large ribosomal subunit, where it forms part of the central protuberance. In the 70S ribosome it contacts protein S13 of the 30S subunit (bridge B1b), connecting the 2 subunits; this bridge is implicated in subunit movement. Contacts the P site tRNA; the 5S rRNA and some of its associated proteins might help stabilize positioning of ribosome-bound tRNAs. The polypeptide is Large ribosomal subunit protein uL5 (Corynebacterium urealyticum (strain ATCC 43042 / DSM 7109)).